Consider the following 115-residue polypeptide: Large ribosomal subunit protein bL19 (115 aa).

It belongs to the bacterial ribosomal protein bL19 family.

Its function is as follows. This protein is located at the 30S-50S ribosomal subunit interface and may play a role in the structure and function of the aminoacyl-tRNA binding site. In Desulfovibrio desulfuricans (strain ATCC 27774 / DSM 6949 / MB), this protein is Large ribosomal subunit protein bL19.